The primary structure comprises 186 residues: MAAWGKKHAGKDPVRDECEERNRFTETREEDVTDEHGEREPFAETDEHTGANTKKPEDTAEDLTAKRKRMKMDKTCSKTKNKSKHALRKKQLKRQKRDYIHSLKLLNVLEEYITDEQKEEEEEEGEEEELIRIFQEQQKKWQQYRSVRRERLKEMKLLRDQFVKALEDFEDLCDRVFSDEDSELDN.

The interval 1 to 93 (MAAWGKKHAG…KHALRKKQLK (93 aa)) is disordered. Composition is skewed to basic and acidic residues over residues 10-27 (GKDP…FTET) and 34-58 (DEHG…KPED). Over residues 66–93 (KRKRMKMDKTCSKTKNKSKHALRKKQLK) the composition is skewed to basic residues.

The protein belongs to the XLR/SYCP3 family. In terms of tissue distribution, expressed in testis and ovary (at protein level).

It is found in the nucleus. The protein resides in the cytoplasm. It localises to the chromosome. May play a role in meiosis. This chain is Protein FAM9B, found in Homo sapiens (Human).